The following is a 91-amino-acid chain: Sec-independent protein translocase protein TatA (91 aa).

Residues 1–21 form a helical membrane-spanning segment; sequence MGSMSVWHWVIVAVVVMLLFG. Residues 42–91 form a disordered region; the sequence is GMADDETQPTNTTSVPPVGPNDPVRTLPHQGAPGTAPQQTHVPAGDHKAV.

Belongs to the TatA/E family. The Tat system comprises two distinct complexes: a TatABC complex, containing multiple copies of TatA, TatB and TatC subunits, and a separate TatA complex, containing only TatA subunits. Substrates initially bind to the TatABC complex, which probably triggers association of the separate TatA complex to form the active translocon.

The protein localises to the cell inner membrane. Functionally, part of the twin-arginine translocation (Tat) system that transports large folded proteins containing a characteristic twin-arginine motif in their signal peptide across membranes. TatA could form the protein-conducting channel of the Tat system. The sequence is that of Sec-independent protein translocase protein TatA from Methylorubrum populi (strain ATCC BAA-705 / NCIMB 13946 / BJ001) (Methylobacterium populi).